The chain runs to 47 residues: Defensin-like protein 1 (47 aa).

Intrachain disulfides connect C3–C47, C14–C36, C20–C41, and C24–C43.

This sequence belongs to the DEFL family. Protease inhibitor I18 (RTI/MTI-2) subfamily.

The chain is Defensin-like protein 1 from Sorghum bicolor (Sorghum).